A 157-amino-acid polypeptide reads, in one-letter code: 2-C-methyl-D-erythritol 2,4-cyclodiphosphate synthase (157 aa).

Aspartate 8 and histidine 10 together coordinate a divalent metal cation. Residues 8–10 (DVH) and 34–35 (HS) contribute to the 4-CDP-2-C-methyl-D-erythritol 2-phosphate site. An a divalent metal cation-binding site is contributed by histidine 42. 4-CDP-2-C-methyl-D-erythritol 2-phosphate-binding positions include 56 to 58 (DIG), 61 to 65 (FPDTD), 100 to 106 (AQKPKMA), 132 to 135 (TTEE), and phenylalanine 139.

The protein belongs to the IspF family. As to quaternary structure, homotrimer. A divalent metal cation is required as a cofactor.

The enzyme catalyses 4-CDP-2-C-methyl-D-erythritol 2-phosphate = 2-C-methyl-D-erythritol 2,4-cyclic diphosphate + CMP. It functions in the pathway isoprenoid biosynthesis; isopentenyl diphosphate biosynthesis via DXP pathway; isopentenyl diphosphate from 1-deoxy-D-xylulose 5-phosphate: step 4/6. Involved in the biosynthesis of isopentenyl diphosphate (IPP) and dimethylallyl diphosphate (DMAPP), two major building blocks of isoprenoid compounds. Catalyzes the conversion of 4-diphosphocytidyl-2-C-methyl-D-erythritol 2-phosphate (CDP-ME2P) to 2-C-methyl-D-erythritol 2,4-cyclodiphosphate (ME-CPP) with a corresponding release of cytidine 5-monophosphate (CMP). In Clostridium novyi (strain NT), this protein is 2-C-methyl-D-erythritol 2,4-cyclodiphosphate synthase.